The chain runs to 267 residues: Hydrolase FUB4 (267 aa).

Active-site charge relay system residues include serine 93, aspartate 183, and histidine 243.

Belongs to the AB hydrolase 3 family.

It participates in mycotoxin biosynthesis. In terms of biological role, hydrolase; part of the gene cluster that mediates the biosynthesis of fusaric acid, a mycotoxin with low to moderate toxicity to animals and humans, but with high phytotoxic properties. L-aspartate is suggested as fusaric acid amino acid precursor that is activated and further processed to O-acetyl-L-homoserine by cluster enzymes aspartate kinase FUB3 and homoserine O-acetyltransferase FUB5, as well as enzymes of the primary metabolism. The polyketide synthase (PKS) FUB1 generates the triketide trans-2-hexenal which is presumptively released by the hydrolase FUB4 and linked to the NRPS-bound amino acid precursor by NAD(P)-dependent dehydrogenase FUB6. FUB1, FUB4, and the non-canonical NRPS Fub8 may form an enzyme complex. Further processing of the NRPS-bound intermediate might be carried out by FUB6 and the sulfhydrylase FUB7, enabling a spontaneous electrocyclization to close the carbon backbone of fusaric acid. Dihydrofusaric acid is likely to be released via reduction by the thioester reductase (TR) domain of FUB8 whereupon the final oxidation to fusaric acid may (also) be performed by the FMN-dependent dehydrogenase FUB9. The chain is Hydrolase FUB4 from Fusarium oxysporum f. sp. lycopersici (strain 4287 / CBS 123668 / FGSC 9935 / NRRL 34936) (Fusarium vascular wilt of tomato).